The following is a 149-amino-acid chain: MSKAMEKRRAARKLALQALYQWRVAGASISQIEAEFAVDNDLQQVDRDLFKAVLYGVPSSVSELDALLQPFVDRKLTDVDPVELSLIRMGAFELRSRIEVPYRVVINEAVELAKQFGGTDGHKFVNSVLDKLAPQLRQAEVAAAKSKKK.

The protein belongs to the NusB family.

Its function is as follows. Involved in transcription antitermination. Required for transcription of ribosomal RNA (rRNA) genes. Binds specifically to the boxA antiterminator sequence of the ribosomal RNA (rrn) operons. The protein is Transcription antitermination protein NusB of Hahella chejuensis (strain KCTC 2396).